Reading from the N-terminus, the 263-residue chain is Endonuclease 8 (263 aa).

Pro2 serves as the catalytic Schiff-base intermediate with DNA. Glu3 serves as the catalytic Proton donor. Lys53 serves as the catalytic Proton donor; for beta-elimination activity. Residues Gln70, Arg125, and Asn169 each coordinate DNA. An FPG-type zinc finger spans residues Lys229–Lys263. Arg253 serves as the catalytic Proton donor; for delta-elimination activity.

It belongs to the FPG family. Zn(2+) serves as cofactor.

It carries out the reaction 2'-deoxyribonucleotide-(2'-deoxyribose 5'-phosphate)-2'-deoxyribonucleotide-DNA = a 3'-end 2'-deoxyribonucleotide-(2,3-dehydro-2,3-deoxyribose 5'-phosphate)-DNA + a 5'-end 5'-phospho-2'-deoxyribonucleoside-DNA + H(+). Functionally, involved in base excision repair of DNA damaged by oxidation or by mutagenic agents. Acts as a DNA glycosylase that recognizes and removes damaged bases. Has a preference for oxidized pyrimidines, such as thymine glycol, 5,6-dihydrouracil and 5,6-dihydrothymine. Has AP (apurinic/apyrimidinic) lyase activity and introduces nicks in the DNA strand. Cleaves the DNA backbone by beta-delta elimination to generate a single-strand break at the site of the removed base with both 3'- and 5'-phosphates. The sequence is that of Endonuclease 8 from Salmonella enteritidis PT4 (strain P125109).